The following is a 320-amino-acid chain: Protein MRH1 (320 aa).

Residues methionine 1–aspartate 34 lie on the Extracellular side of the membrane. The helical transmembrane segment at tryptophan 35–phenylalanine 55 threads the bilayer. Residues arginine 56 to arginine 62 are Cytoplasmic-facing. The chain crosses the membrane as a helical span at residues phenylalanine 63–alanine 83. Residues serine 84–arginine 116 lie on the Extracellular side of the membrane. Residues phenylalanine 117–threonine 137 form a helical membrane-spanning segment. The Cytoplasmic segment spans residues proline 138–glutamine 141. Residues methionine 142–valine 162 traverse the membrane as a helical segment. Residues histidine 163–lysine 167 are Extracellular-facing. A helical membrane pass occupies residues tryptophan 168–threonine 188. The Cytoplasmic portion of the chain corresponds to serine 189–phenylalanine 204. A helical transmembrane segment spans residues leucine 205–isoleucine 225. At threonine 226–glycine 238 the chain is on the extracellular side. Residues isoleucine 239–isoleucine 259 traverse the membrane as a helical segment. Over alanine 260–glutamate 320 the chain is Cytoplasmic. The disordered stretch occupies residues alanine 285 to glutamate 320. Serine 289 carries the phosphoserine modification. At threonine 295 the chain carries Phosphothreonine. A Phosphoserine modification is found at serine 299. The span at aspartate 301 to glutamate 320 shows a compositional bias: basic residues.

The protein belongs to the archaeal/bacterial/fungal opsin family.

The protein localises to the cell membrane. It localises to the mitochondrion. The protein resides in the bud. This Saccharomyces cerevisiae (strain ATCC 204508 / S288c) (Baker's yeast) protein is Protein MRH1 (MRH1).